The sequence spans 294 residues: Cell division protein ZipA (294 aa).

Residue Met1 is a topological domain, periplasmic. A helical transmembrane segment spans residues 2 to 22 (EIGLREWLILIGIIVIAGILF). Topologically, residues 23-294 (DGWRRMRGGK…FERRALTQKR (272 aa)) are cytoplasmic. Disordered stretches follow at residues 64 to 111 (THKE…GDLN) and 126 to 146 (KDDFVADNNRHGAAATPSTPV). Positions 82 to 91 (ARERERDPKP) are enriched in basic and acidic residues.

It belongs to the ZipA family. In terms of assembly, interacts with FtsZ via their C-terminal domains.

The protein localises to the cell inner membrane. Its function is as follows. Essential cell division protein that stabilizes the FtsZ protofilaments by cross-linking them and that serves as a cytoplasmic membrane anchor for the Z ring. Also required for the recruitment to the septal ring of downstream cell division proteins. In Pseudomonas entomophila (strain L48), this protein is Cell division protein ZipA.